The following is a 184-amino-acid chain: ATP synthase subunit b, chloroplastic (184 aa).

Residues 27 to 49 (LATNPINLSVVLGVLVFFGKGVL) traverse the membrane as a helical segment.

It belongs to the ATPase B chain family. F-type ATPases have 2 components, F(1) - the catalytic core - and F(0) - the membrane proton channel. F(1) has five subunits: alpha(3), beta(3), gamma(1), delta(1), epsilon(1). F(0) has four main subunits: a(1), b(1), b'(1) and c(10-14). The alpha and beta chains form an alternating ring which encloses part of the gamma chain. F(1) is attached to F(0) by a central stalk formed by the gamma and epsilon chains, while a peripheral stalk is formed by the delta, b and b' chains.

It localises to the plastid. It is found in the chloroplast thylakoid membrane. Functionally, f(1)F(0) ATP synthase produces ATP from ADP in the presence of a proton or sodium gradient. F-type ATPases consist of two structural domains, F(1) containing the extramembraneous catalytic core and F(0) containing the membrane proton channel, linked together by a central stalk and a peripheral stalk. During catalysis, ATP synthesis in the catalytic domain of F(1) is coupled via a rotary mechanism of the central stalk subunits to proton translocation. Component of the F(0) channel, it forms part of the peripheral stalk, linking F(1) to F(0). The chain is ATP synthase subunit b, chloroplastic from Phaseolus vulgaris (Kidney bean).